The primary structure comprises 399 residues: S-adenosylmethionine synthase (399 aa).

His-17 lines the ATP pocket. Residue Asp-19 coordinates Mg(2+). Position 45 (Glu-45) interacts with K(+). L-methionine contacts are provided by Glu-58 and Gln-101. The segment at Gln-101 to Gln-111 is flexible loop. Residues Asp-177–Lys-179, Arg-244–Phe-245, Asp-253, Arg-259–Lys-260, Ala-276, and Lys-280 each bind ATP. Residue Asp-253 coordinates L-methionine. Lys-284 is an L-methionine binding site.

Belongs to the AdoMet synthase family. As to quaternary structure, homotetramer; dimer of dimers. Requires Mg(2+) as cofactor. K(+) is required as a cofactor.

The protein localises to the cytoplasm. The enzyme catalyses L-methionine + ATP + H2O = S-adenosyl-L-methionine + phosphate + diphosphate. It functions in the pathway amino-acid biosynthesis; S-adenosyl-L-methionine biosynthesis; S-adenosyl-L-methionine from L-methionine: step 1/1. Functionally, catalyzes the formation of S-adenosylmethionine (AdoMet) from methionine and ATP. The overall synthetic reaction is composed of two sequential steps, AdoMet formation and the subsequent tripolyphosphate hydrolysis which occurs prior to release of AdoMet from the enzyme. This chain is S-adenosylmethionine synthase, found in Bacillus mycoides (strain KBAB4) (Bacillus weihenstephanensis).